Here is a 404-residue protein sequence, read N- to C-terminus: Alanyl-tRNA editing protein AlaX-L (404 aa).

Zn(2+)-binding residues include histidine 104, histidine 108, cysteine 202, and histidine 206.

Belongs to the class-II aminoacyl-tRNA synthetase family. Editing domain AlaX-L subfamily. It depends on Zn(2+) as a cofactor.

Its subcellular location is the cytoplasm. In terms of biological role, functions in trans to edit the amino acid moiety from mischarged charged tRNA(Ala). The protein is Alanyl-tRNA editing protein AlaX-L (alaXL) of Pyrococcus horikoshii (strain ATCC 700860 / DSM 12428 / JCM 9974 / NBRC 100139 / OT-3).